Reading from the N-terminus, the 385-residue chain is Leucine aminopeptidase 1 (385 aa).

The first 19 residues, 1 to 19, serve as a signal peptide directing secretion; sequence MKFPSFLSLGIAASTTALA. Residues 20–87 constitute a propeptide that is removed on maturation; that stretch reads ALPDQKPIGD…FPRAFAKTAV (68 aa). Asn177 carries an N-linked (GlcNAc...) asparagine glycan. Positions 185 and 204 each coordinate Zn(2+). N-linked (GlcNAc...) asparagine glycosylation is present at Asn229. Glu243 and Asp270 together coordinate Zn(2+). A disulfide bond links Cys319 and Cys323. Zn(2+) is bound at residue His352.

This sequence belongs to the peptidase M28 family. M28E subfamily. Monomer. Zn(2+) is required as a cofactor.

The protein resides in the secreted. Extracellular aminopeptidase that allows assimilation of proteinaceous substrates. The polypeptide is Leucine aminopeptidase 1 (LAP1) (Blastomyces gilchristii (strain SLH14081) (Blastomyces dermatitidis)).